The primary structure comprises 443 residues: Serine--tRNA ligase (443 aa).

246–248 (TAE) serves as a coordination point for L-serine. An ATP-binding site is contributed by 277–279 (RAE). Glutamate 300 contributes to the L-serine binding site. 367-370 (EISS) is an ATP binding site. Serine 402 contributes to the L-serine binding site.

This sequence belongs to the class-II aminoacyl-tRNA synthetase family. Type-1 seryl-tRNA synthetase subfamily. As to quaternary structure, homodimer. The tRNA molecule binds across the dimer.

It localises to the cytoplasm. It carries out the reaction tRNA(Ser) + L-serine + ATP = L-seryl-tRNA(Ser) + AMP + diphosphate + H(+). The enzyme catalyses tRNA(Sec) + L-serine + ATP = L-seryl-tRNA(Sec) + AMP + diphosphate + H(+). Its pathway is aminoacyl-tRNA biosynthesis; selenocysteinyl-tRNA(Sec) biosynthesis; L-seryl-tRNA(Sec) from L-serine and tRNA(Sec): step 1/1. Catalyzes the attachment of serine to tRNA(Ser). Is also able to aminoacylate tRNA(Sec) with serine, to form the misacylated tRNA L-seryl-tRNA(Sec), which will be further converted into selenocysteinyl-tRNA(Sec). The chain is Serine--tRNA ligase from Bradyrhizobium diazoefficiens (strain JCM 10833 / BCRC 13528 / IAM 13628 / NBRC 14792 / USDA 110).